The following is an 89-amino-acid chain: MANIKASKKDALTSEKRRKKNSSRRSMIRTFVKKVRVAIMSGNKTTAEDAFKKMQPIIDSHVNKGLIHKNKAARYKSNLSLQIKKISKI.

The interval 1–26 (MANIKASKKDALTSEKRRKKNSSRRS) is disordered. A compositionally biased stretch (basic residues) spans 16–26 (KRRKKNSSRRS).

This sequence belongs to the bacterial ribosomal protein bS20 family.

Functionally, binds directly to 16S ribosomal RNA. This chain is Small ribosomal subunit protein bS20, found in Buchnera aphidicola subsp. Acyrthosiphon pisum (strain 5A).